Consider the following 734-residue polypeptide: Cullin-4 (734 aa).

A Cullin neddylation domain is found at 666-728 (DRQFELQASI…KEYLEREDND (63 aa)). A Glycyl lysine isopeptide (Lys-Gly) (interchain with G-Cter in NEDD8) cross-link involves residue Lys-680.

The protein belongs to the cullin family. As to quaternary structure, component of the Clr4 methyltransferase complex (ClrC) composed of at least clr4, rik1, pcu4, rbx1, raf1 and raf2. The cullin pcu4, rik1, raf1, raf2 and the ring-box protein rbx1 are components of an E3 ubiquitin ligase, whose activity is essential for heterochromatin assembly. In terms of processing, neddylated; enhancing the ubiquitin-ligase activity.

The protein localises to the cytoplasm. The protein resides in the nucleus. Its subcellular location is the chromosome. Its pathway is protein modification; protein ubiquitination. Its function is as follows. Required, indirectly, for activation of ribonucleotide reductase through the degradation of the protein spd1, thereby supplying deoxyribonucleotides for DNA replication and repair. Also has a role as a scaffold for assembling ubiquitin ligases. Component of the Clr4 methyltransferase complex (ClrC) which contributes to the establishment of heterochromatin by specifically methylating histone H3 to form H3K9me. ClrC preferentially ubiquitylates H3K14 and ClrC-mediated H3 ubiquitination promotes clr4 methyltransferase activity for the methylation of H3K9. H3K9me represents a specific tag for epigenetic transcriptional repression by recruiting swi6/HP1 to methylated histones which leads to transcriptional silencing within centromeric heterochromatin, telomeric regions and at the silent mating-type loci. This is Cullin-4 (pcu4) from Schizosaccharomyces pombe (strain 972 / ATCC 24843) (Fission yeast).